The following is a 461-amino-acid chain: Phosphomethylpyrimidine synthase (461 aa).

Substrate is bound by residues asparagine 80, methionine 109, tyrosine 138, histidine 173, 193 to 195 (SRG), 234 to 237 (DGLR), and glutamate 273. Histidine 277 lines the Zn(2+) pocket. Position 300 (tyrosine 300) interacts with substrate. Zn(2+) is bound at residue histidine 341. 3 residues coordinate [4Fe-4S] cluster: cysteine 421, cysteine 424, and cysteine 429.

Belongs to the ThiC family. [4Fe-4S] cluster serves as cofactor.

It catalyses the reaction 5-amino-1-(5-phospho-beta-D-ribosyl)imidazole + S-adenosyl-L-methionine = 4-amino-2-methyl-5-(phosphooxymethyl)pyrimidine + CO + 5'-deoxyadenosine + formate + L-methionine + 3 H(+). The protein operates within cofactor biosynthesis; thiamine diphosphate biosynthesis. In terms of biological role, catalyzes the synthesis of the hydroxymethylpyrimidine phosphate (HMP-P) moiety of thiamine from aminoimidazole ribotide (AIR) in a radical S-adenosyl-L-methionine (SAM)-dependent reaction. The protein is Phosphomethylpyrimidine synthase of Solibacter usitatus (strain Ellin6076).